The following is a 345-amino-acid chain: Beta-hexosaminidase (345 aa).

Substrate contacts are provided by residues Asp-60, Arg-68, Arg-132, and 162 to 163 (KH). His-175 acts as the Proton donor/acceptor in catalysis. Asp-247 acts as the Nucleophile in catalysis.

It belongs to the glycosyl hydrolase 3 family. NagZ subfamily.

It is found in the cytoplasm. The enzyme catalyses Hydrolysis of terminal non-reducing N-acetyl-D-hexosamine residues in N-acetyl-beta-D-hexosaminides.. It functions in the pathway cell wall biogenesis; peptidoglycan recycling. In terms of biological role, plays a role in peptidoglycan recycling by cleaving the terminal beta-1,4-linked N-acetylglucosamine (GlcNAc) from peptide-linked peptidoglycan fragments, giving rise to free GlcNAc, anhydro-N-acetylmuramic acid and anhydro-N-acetylmuramic acid-linked peptides. This is Beta-hexosaminidase from Actinobacillus pleuropneumoniae serotype 5b (strain L20).